The following is a 130-amino-acid chain: Small ribosomal subunit protein uS9 (130 aa).

The protein belongs to the universal ribosomal protein uS9 family.

The protein is Small ribosomal subunit protein uS9 of Ectopseudomonas mendocina (strain ymp) (Pseudomonas mendocina).